Here is a 63-residue protein sequence, read N- to C-terminus: Large ribosomal subunit protein bL35 (63 aa).

Belongs to the bacterial ribosomal protein bL35 family.

This Thermobifida fusca (strain YX) protein is Large ribosomal subunit protein bL35.